Reading from the N-terminus, the 308-residue chain is Ribonuclease Z (308 aa).

His63, His65, Asp67, His68, His140, Asp211, and His269 together coordinate Zn(2+). Catalysis depends on Asp67, which acts as the Proton acceptor.

This sequence belongs to the RNase Z family. In terms of assembly, homodimer. Requires Zn(2+) as cofactor.

The catalysed reaction is Endonucleolytic cleavage of RNA, removing extra 3' nucleotides from tRNA precursor, generating 3' termini of tRNAs. A 3'-hydroxy group is left at the tRNA terminus and a 5'-phosphoryl group is left at the trailer molecule.. In terms of biological role, zinc phosphodiesterase, which displays some tRNA 3'-processing endonuclease activity. Probably involved in tRNA maturation, by removing a 3'-trailer from precursor tRNA. This Bacillus velezensis (strain DSM 23117 / BGSC 10A6 / LMG 26770 / FZB42) (Bacillus amyloliquefaciens subsp. plantarum) protein is Ribonuclease Z.